The sequence spans 149 residues: 3-dehydroquinate dehydratase (149 aa).

Catalysis depends on Tyr22, which acts as the Proton acceptor. Substrate is bound by residues Asn73, His79, and Asp86. His99 acts as the Proton donor in catalysis. Substrate contacts are provided by residues Leu100 to Ser101 and Arg110.

The protein belongs to the type-II 3-dehydroquinase family. In terms of assembly, homododecamer.

The catalysed reaction is 3-dehydroquinate = 3-dehydroshikimate + H2O. The protein operates within metabolic intermediate biosynthesis; chorismate biosynthesis; chorismate from D-erythrose 4-phosphate and phosphoenolpyruvate: step 3/7. Catalyzes a trans-dehydration via an enolate intermediate. This is 3-dehydroquinate dehydratase from Prochlorococcus marinus (strain SARG / CCMP1375 / SS120).